A 92-amino-acid chain; its full sequence is Small ribosomal subunit protein bS20 (92 aa).

It belongs to the bacterial ribosomal protein bS20 family.

Functionally, binds directly to 16S ribosomal RNA. In Thermosipho africanus (strain TCF52B), this protein is Small ribosomal subunit protein bS20.